The chain runs to 382 residues: MSLNIFWFLPTHGDGKYLGTSEGARAVDHGYLQQIAQAADRLGFGGVLIPTGRSCEDSWLVAASLIPVTQRLKFLVALRPGIISPTVAARQAATLDRLSNGRALFNLVTGGDPDELAGDGLHLNHQERYEASVEFTRIWRKVLEGENVDYDGKHIQVKGAKLLYPPIQQPRPSLYFGGSSEAAQDLAAEQVELYLTWGEPPAAVAEKIAQVREKAAAQGREVRFGIRLHVIVRETNEEAWAAAERLISHLDDDTISRAQASLARFDSVGQQRMAALHGGNRDNLEVSPNLWAGVGLVRGGAGTALVGDGPTVAARVKEYADLGIDTFIFSGYPHLEESYRVAELLFPHLDVQRPEQPKTGGYVSPFGEMVANDILPKSVSQS.

This sequence belongs to the SsuD family.

The enzyme catalyses an alkanesulfonate + FMNH2 + O2 = an aldehyde + FMN + sulfite + H2O + 2 H(+). In terms of biological role, catalyzes the desulfonation of aliphatic sulfonates. This Pseudomonas putida (strain ATCC 700007 / DSM 6899 / JCM 31910 / BCRC 17059 / LMG 24140 / F1) protein is Alkanesulfonate monooxygenase.